We begin with the raw amino-acid sequence, 569 residues long: Sulfite reductase [NADPH] hemoprotein beta-component (569 aa).

Residues Cys-434, Cys-440, Cys-479, and Cys-483 each coordinate [4Fe-4S] cluster. Cys-483 provides a ligand contact to siroheme.

It belongs to the nitrite and sulfite reductase 4Fe-4S domain family. In terms of assembly, alpha(8)-beta(8). The alpha component is a flavoprotein, the beta component is a hemoprotein. Requires siroheme as cofactor. [4Fe-4S] cluster serves as cofactor.

The enzyme catalyses hydrogen sulfide + 3 NADP(+) + 3 H2O = sulfite + 3 NADPH + 4 H(+). The protein operates within sulfur metabolism; hydrogen sulfide biosynthesis; hydrogen sulfide from sulfite (NADPH route): step 1/1. Its function is as follows. Component of the sulfite reductase complex that catalyzes the 6-electron reduction of sulfite to sulfide. This is one of several activities required for the biosynthesis of L-cysteine from sulfate. This is Sulfite reductase [NADPH] hemoprotein beta-component from Staphylococcus carnosus (strain TM300).